The following is a 543-amino-acid chain: Aspartate/alanine antiporter (543 aa).

10 consecutive transmembrane segments (helical) span residues 4 to 26 (IGNF…GYLL), 33 to 55 (SFTL…LGVF), 88 to 110 (FGAK…AYAC), 117 to 139 (GPGI…GSSL), 159 to 178 (IPIV…LIFL), 362 to 381 (IINY…LGIV), 385 to 407 (VSGV…VQSI), 428 to 450 (SIGL…ISAI), 455 to 477 (ISVL…VICY), and 520 to 542 (VAPA…IVLL).

Belongs to the AAE transporter (TC 2.A.81) family.

The protein localises to the cell membrane. In terms of biological role, catalyzes the electrogenic exchange of aspartate with alanine. The protein is Aspartate/alanine antiporter (aspT) of Tetragenococcus halophilus (Pediococcus halophilus).